A 385-amino-acid polypeptide reads, in one-letter code: Probable tRNA sulfurtransferase (385 aa).

Residues 57–161 (NESIKRLSNV…NKNAYVWSNK (105 aa)) enclose the THUMP domain. Residues 181–182 (ML), 206–207 (YY), R263, G285, and Q294 contribute to the ATP site.

It belongs to the ThiI family.

The protein localises to the cytoplasm. It carries out the reaction [ThiI sulfur-carrier protein]-S-sulfanyl-L-cysteine + a uridine in tRNA + 2 reduced [2Fe-2S]-[ferredoxin] + ATP + H(+) = [ThiI sulfur-carrier protein]-L-cysteine + a 4-thiouridine in tRNA + 2 oxidized [2Fe-2S]-[ferredoxin] + AMP + diphosphate. The enzyme catalyses [ThiS sulfur-carrier protein]-C-terminal Gly-Gly-AMP + S-sulfanyl-L-cysteinyl-[cysteine desulfurase] + AH2 = [ThiS sulfur-carrier protein]-C-terminal-Gly-aminoethanethioate + L-cysteinyl-[cysteine desulfurase] + A + AMP + 2 H(+). It participates in cofactor biosynthesis; thiamine diphosphate biosynthesis. Functionally, catalyzes the ATP-dependent transfer of a sulfur to tRNA to produce 4-thiouridine in position 8 of tRNAs, which functions as a near-UV photosensor. Also catalyzes the transfer of sulfur to the sulfur carrier protein ThiS, forming ThiS-thiocarboxylate. This is a step in the synthesis of thiazole, in the thiamine biosynthesis pathway. The sulfur is donated as persulfide by IscS. The chain is Probable tRNA sulfurtransferase from Clostridium botulinum (strain Alaska E43 / Type E3).